The chain runs to 143 residues: MKTTKVAKKEEVTRDWYLVDADNKVLGRMATEIANILRGKKKPIYTPSVDTGDFVVVVNAAKLQLTGNKLADKMYYHHTGFPGGIKSITAGKLIEKKPEDLIRKAVKGMLPKNKLARHMLKKLKVYAGPEHPHEAQQPKTLDI.

Belongs to the universal ribosomal protein uL13 family. Part of the 50S ribosomal subunit.

Its function is as follows. This protein is one of the early assembly proteins of the 50S ribosomal subunit, although it is not seen to bind rRNA by itself. It is important during the early stages of 50S assembly. This Geobacter sulfurreducens (strain ATCC 51573 / DSM 12127 / PCA) protein is Large ribosomal subunit protein uL13.